We begin with the raw amino-acid sequence, 359 residues long: CDP-glucose 4,6-dehydratase (359 aa).

Belongs to the NAD(P)-dependent epimerase/dehydratase family. The cofactor is NAD(+).

It carries out the reaction CDP-D-glucose = CDP-4-dehydro-6-deoxy-D-glucose + H2O. It participates in nucleotide-sugar biosynthesis; CDP-3,6-dideoxy-D-mannose biosynthesis; CDP-3,6-dideoxy-D-mannose from CTP and alpha-D-glucose 1-phosphate: step 2/5. The protein operates within bacterial outer membrane biogenesis; LPS O-antigen biosynthesis. The chain is CDP-glucose 4,6-dehydratase (rfbG) from Salmonella typhimurium (strain LT2 / SGSC1412 / ATCC 700720).